A 330-amino-acid polypeptide reads, in one-letter code: Peptide transport system ATP-binding protein SapD (330 aa).

Residues 6 to 259 form the ABC transporter domain; it reads IRNLTIEFKT…PHHPYTQALI (254 aa). Residue 40–47 participates in ATP binding; it reads GESGSGKS.

It belongs to the ABC transporter superfamily.

It is found in the cell inner membrane. Involved in a peptide intake transport system that plays a role in the resistance to antimicrobial peptides. This Escherichia coli O157:H7 protein is Peptide transport system ATP-binding protein SapD (sapD).